The following is a 475-amino-acid chain: Ankyrin repeat, SAM and basic leucine zipper domain-containing protein 1 (475 aa).

Positions 1–38 are disordered; it reads MATGSLRGLAVAGGGESSDSEDDGWEIGYLDRPPQKLK. Phosphoserine occurs at positions 17, 18, and 20. ANK repeat units lie at residues 45 to 74, 78 to 107, 110 to 144, 148 to 177, 181 to 210, and 214 to 243; these read EKNETFKKALTTGDTSLVKELLDSGISVDS, YGWTPLMYAASVANVELVRVLLDRGANASF, DKQTILITACSARGSEEQILKCVELLLSRNADPNV, RLMTPIMYAARDGHPQVVALLVAHGAEVNI, NGYTALTWAARQGHKSVVLKLLELGANKTL, and DGKTPSEIAKRNKHLEIFNLLSLTLNPLEG. The SAM domain maps to 272–334; that stretch reads SYTAFGDLEI…KILAALKELE (63 aa).

As to quaternary structure, interacts with DDX4, PIWIL1, RANBP9 and TDRD1.

It is found in the cytoplasm. Its function is as follows. Plays a central role during spermatogenesis by repressing transposable elements and preventing their mobilization, which is essential for the germline integrity. Acts via the piRNA metabolic process, which mediates the repression of transposable elements during meiosis by forming complexes composed of piRNAs and Piwi proteins and governs the methylation and subsequent repression of transposons. Its association with pi-bodies suggests a participation in the primary piRNAs metabolic process. Required prior to the pachytene stage to facilitate the production of multiple types of piRNAs, including those associated with repeats involved in the regulation of retrotransposons. May act by mediating protein-protein interactions during germ cell maturation. In Oryctolagus cuniculus (Rabbit), this protein is Ankyrin repeat, SAM and basic leucine zipper domain-containing protein 1 (ASZ1).